The sequence spans 467 residues: Fumarate hydratase class II (467 aa).

Residues 99-101, 130-133, 140-142, and Thr-188 contribute to the substrate site; these read SGT, HPND, and SSN. His-189 acts as the Proton donor/acceptor in catalysis. Ser-319 is an active-site residue. Residues Ser-320 and 325–327 contribute to the substrate site; that span reads KVN.

Belongs to the class-II fumarase/aspartase family. Fumarase subfamily. In terms of assembly, homotetramer.

The protein resides in the cytoplasm. The catalysed reaction is (S)-malate = fumarate + H2O. It functions in the pathway carbohydrate metabolism; tricarboxylic acid cycle; (S)-malate from fumarate: step 1/1. In terms of biological role, involved in the TCA cycle. Catalyzes the stereospecific interconversion of fumarate to L-malate. This Thermosynechococcus vestitus (strain NIES-2133 / IAM M-273 / BP-1) protein is Fumarate hydratase class II.